Here is a 99-residue protein sequence, read N- to C-terminus: Aspartyl/glutamyl-tRNA(Asn/Gln) amidotransferase subunit C (99 aa).

The protein belongs to the GatC family. In terms of assembly, heterotrimer of A, B and C subunits.

The catalysed reaction is L-glutamyl-tRNA(Gln) + L-glutamine + ATP + H2O = L-glutaminyl-tRNA(Gln) + L-glutamate + ADP + phosphate + H(+). It catalyses the reaction L-aspartyl-tRNA(Asn) + L-glutamine + ATP + H2O = L-asparaginyl-tRNA(Asn) + L-glutamate + ADP + phosphate + 2 H(+). Functionally, allows the formation of correctly charged Asn-tRNA(Asn) or Gln-tRNA(Gln) through the transamidation of misacylated Asp-tRNA(Asn) or Glu-tRNA(Gln) in organisms which lack either or both of asparaginyl-tRNA or glutaminyl-tRNA synthetases. The reaction takes place in the presence of glutamine and ATP through an activated phospho-Asp-tRNA(Asn) or phospho-Glu-tRNA(Gln). The polypeptide is Aspartyl/glutamyl-tRNA(Asn/Gln) amidotransferase subunit C (Burkholderia vietnamiensis (strain G4 / LMG 22486) (Burkholderia cepacia (strain R1808))).